The following is a 107-amino-acid chain: UPF0473 protein llmg_0152 (107 aa).

This sequence belongs to the UPF0473 family.

The chain is UPF0473 protein llmg_0152 from Lactococcus lactis subsp. cremoris (strain MG1363).